Consider the following 195-residue polypeptide: Probable GTP-binding protein EngB (195 aa).

In terms of domain architecture, EngB-type G spans 24-195 (ELPEIALAGR…EAWDAILEKL (172 aa)). GTP contacts are provided by residues 32–39 (GRSNVGKS), 59–63 (GKTQL), 77–80 (DVPG), 144–147 (TKAD), and 176–178 (FSS). 2 residues coordinate Mg(2+): S39 and T61.

Belongs to the TRAFAC class TrmE-Era-EngA-EngB-Septin-like GTPase superfamily. EngB GTPase family. Requires Mg(2+) as cofactor.

In terms of biological role, necessary for normal cell division and for the maintenance of normal septation. The sequence is that of Probable GTP-binding protein EngB from Streptococcus pneumoniae (strain Hungary19A-6).